Consider the following 41-residue polypeptide: U15-myrmicitoxin-Tb1b (41 aa).

An N-terminal signal peptide occupies residues 1–25; the sequence is MKIVKLITIFAMIATLMVTVTNGEA. Residue histidine 40 is modified to Histidine amide.

In terms of tissue distribution, expressed by the venom gland.

Its subcellular location is the secreted. Its function is as follows. Venom protein with unknown function. Does not induce paralysis when a high dose is administered by intrathoracic injection into the blowfly Lucilia caesar. This chain is U15-myrmicitoxin-Tb1b, found in Tetramorium bicarinatum (Tramp ant).